The chain runs to 337 residues: tRNA N6-adenosine threonylcarbamoyltransferase (337 aa).

Fe cation contacts are provided by histidine 111 and histidine 115. Residues 134–138 (LVSGG), aspartate 167, glycine 180, and asparagine 272 each bind substrate. Aspartate 300 lines the Fe cation pocket.

Belongs to the KAE1 / TsaD family. Requires Fe(2+) as cofactor.

It localises to the cytoplasm. The enzyme catalyses L-threonylcarbamoyladenylate + adenosine(37) in tRNA = N(6)-L-threonylcarbamoyladenosine(37) in tRNA + AMP + H(+). In terms of biological role, required for the formation of a threonylcarbamoyl group on adenosine at position 37 (t(6)A37) in tRNAs that read codons beginning with adenine. Is involved in the transfer of the threonylcarbamoyl moiety of threonylcarbamoyl-AMP (TC-AMP) to the N6 group of A37, together with TsaE and TsaB. TsaD likely plays a direct catalytic role in this reaction. The polypeptide is tRNA N6-adenosine threonylcarbamoyltransferase (Shewanella sediminis (strain HAW-EB3)).